A 755-amino-acid polypeptide reads, in one-letter code: Dolichyl-phosphate-mannose--protein mannosyltransferase 4 (755 aa).

The disordered stretch occupies residues 1 to 23 (MSQTLKKRGGNSSGRKSPTTSNI). Asn-11 carries an N-linked (GlcNAc...) asparagine glycan. Residues 13–23 (SGRKSPTTSNI) are compositionally biased toward polar residues. Transmembrane regions (helical) follow at residues 92–112 (FFDL…WLIG), 147–167 (IVPI…ACLF), 185–205 (ILLD…YSKF), 212–232 (SFSS…SCVI), 237–257 (VGVF…WILL), and 278–298 (ALII…FAIL). MIR domains are found at residues 325–389 (SKPV…IVPT), 396–454 (GTKV…LRLH), and 466–523 (KKEI…FDLI). A glycan (N-linked (GlcNAc...) asparagine) is linked at Asn-445. A run of 3 helical transmembrane segments spans residues 595 to 615 (IFFI…SIYI), 640 to 660 (LYNT…PFFL), and 670 to 690 (YLPA…FICS). A glycan (N-linked (GlcNAc...) asparagine) is linked at Asn-691. A helical membrane pass occupies residues 706-726 (YKIIAVVAACSTAIIWFFFYF).

The protein belongs to the glycosyltransferase 39 family. Forms a functional homodimer.

The protein localises to the endoplasmic reticulum membrane. The catalysed reaction is a di-trans,poly-cis-dolichyl beta-D-mannosyl phosphate + L-seryl-[protein] = 3-O-(alpha-D-mannosyl)-L-seryl-[protein] + a di-trans,poly-cis-dolichyl phosphate + H(+). The enzyme catalyses a di-trans,poly-cis-dolichyl beta-D-mannosyl phosphate + L-threonyl-[protein] = 3-O-(alpha-D-mannosyl)-L-threonyl-[protein] + a di-trans,poly-cis-dolichyl phosphate + H(+). Its pathway is protein modification; protein glycosylation. Functionally, protein mannosyltransferase (PMT) involved in hyphal growth and drug sensitivity. Transfers mannose from Dol-P-mannose to Ser or Thr residues on proteins. PMT1, PMT2 and PMT4 account for most of the protein-O-glycosylation activity, while PMT5 and PMT6 may specifically modulate a much narrower spectrum of target proteins. Accounts for the O-glycosylation of AXL2, responsible for bud site selection, as well as of the SEC20 t-SNARE component. O-glycosylation of SEC20 is essential for its stability. Required for biofilm formation. The protein is Dolichyl-phosphate-mannose--protein mannosyltransferase 4 of Candida albicans (strain SC5314 / ATCC MYA-2876) (Yeast).